Consider the following 541-residue polypeptide: MAETPELEPHNAFDTILTLDFGSQYTHLITRRLRELNVYSEMLPCTQKLADLKFKPAGVILSGGPYSVYEEGAPHVDPAYFDLGVPILGICYGLQEIAYRLDSTNVIAGTSREYGLAQLKAKKVGGHVDHLFDGLEDEFNVWMSHGDKLGKLPEGFHTIATTPNSEYAGIAHETKPIYGLQLHPEVTHTQNGTKLLKNFAVNICGCKQNWTMARFVDQEIARIRKLVGPTGQVLGAVSGGVDSTVAAKLMKEAIGDRFHAVLVDTGFMRLNECEQVKQTLAEHLGINLIVADASQVFMEGLKGISDPEQKRKFIGNKFIDVFEEEAKKIEDAAAHSETAGKIGFFLQGTLYPDVIESISFKGPSATIKTHHNVGGLPKRMTEGQGLKLIEPLRELFKDEVRDLGRQLGIAHEMVMRHPFPGPGIAIRILGEITPERVEMARKADHIFISMIREAGLYDKIGQAFAALDPSRAVGVMGDKRVYENIVLLRAVETTDFMTAIAYPFEHEFLTRVSTRIVNEVSGVCRVAYDYTSKPPGTIELE.

The region spanning 15–209 (TILTLDFGSQ…AVNICGCKQN (195 aa)) is the Glutamine amidotransferase type-1 domain. The Nucleophile role is filled by C91. Residues H183 and E185 contribute to the active site. The GMPS ATP-PPase domain maps to 210-416 (WTMARFVDQE…LGIAHEMVMR (207 aa)). 238-244 (SGGVDST) serves as a coordination point for ATP. XMP contacts are provided by R311, D478, K533, and E539.

Homodimer. Mg(2+) serves as cofactor.

Its subcellular location is the cytoplasm. The protein localises to the cytosol. It carries out the reaction XMP + L-glutamine + ATP + H2O = GMP + L-glutamate + AMP + diphosphate + 2 H(+). It participates in purine metabolism; GMP biosynthesis; GMP from XMP (L-Gln route): step 1/1. In terms of biological role, catalyzes the conversion of xanthine monophosphate (XMP) to GMP in the presence of glutamine and ATP through an adenyl-XMP intermediate. This is GMP synthase [glutamine-hydrolyzing] (gua1) from Aspergillus oryzae (strain ATCC 42149 / RIB 40) (Yellow koji mold).